Reading from the N-terminus, the 114-residue chain is Fatty acid-binding protein, liver (114 aa).

The protein belongs to the calycin superfamily. Fatty-acid binding protein (FABP) family. The N-terminus is blocked.

Its subcellular location is the cytoplasm. In terms of biological role, FABPs are thought to play a role in the intracellular transport of long-chain fatty acids and their acyl-CoA esters. In Lethenteron camtschaticum (Japanese lamprey), this protein is Fatty acid-binding protein, liver.